The chain runs to 299 residues: Protoheme IX farnesyltransferase (299 aa).

The next 9 helical transmembrane spans lie at 25–45 (VVLL…RAGV), 47–67 (WTVL…AAAV), 95–115 (AAAL…LLTF), 119–139 (LAAW…TGFL), 147–167 (IVIG…AVTG), 173–193 (PLLL…ALAI), 218–238 (VHIL…FAIH), 243–263 (LYLA…IALY), and 277–297 (FSIW…YLLL).

It belongs to the UbiA prenyltransferase family. Protoheme IX farnesyltransferase subfamily.

It localises to the cell inner membrane. The catalysed reaction is heme b + (2E,6E)-farnesyl diphosphate + H2O = Fe(II)-heme o + diphosphate. It functions in the pathway porphyrin-containing compound metabolism; heme O biosynthesis; heme O from protoheme: step 1/1. Converts heme B (protoheme IX) to heme O by substitution of the vinyl group on carbon 2 of heme B porphyrin ring with a hydroxyethyl farnesyl side group. This Stutzerimonas stutzeri (strain A1501) (Pseudomonas stutzeri) protein is Protoheme IX farnesyltransferase.